We begin with the raw amino-acid sequence, 203 residues long: Small ribosomal subunit protein uS4 (203 aa).

The region spanning 93-156 is the S4 RNA-binding domain; the sequence is RRLDNVVYRL…AKVPAILEAV (64 aa).

The protein belongs to the universal ribosomal protein uS4 family. As to quaternary structure, part of the 30S ribosomal subunit. Contacts protein S5. The interaction surface between S4 and S5 is involved in control of translational fidelity.

In terms of biological role, one of the primary rRNA binding proteins, it binds directly to 16S rRNA where it nucleates assembly of the body of the 30S subunit. With S5 and S12 plays an important role in translational accuracy. The chain is Small ribosomal subunit protein uS4 from Streptococcus mutans serotype c (strain ATCC 700610 / UA159).